The following is a 200-amino-acid chain: Probable GTP-binding protein EngB (200 aa).

In terms of domain architecture, EngB-type G spans 30 to 199; it reads KKAEVAIAGR…EDYIYENWIK (170 aa). Residues 38–45, 64–68, 82–85, 149–152, and 178–180 each bind GTP; these read GRSNAGKS, GKTRL, DMPG, TKAD, and VSA. 2 residues coordinate Mg(2+): Ser-45 and Thr-66.

Belongs to the TRAFAC class TrmE-Era-EngA-EngB-Septin-like GTPase superfamily. EngB GTPase family. The cofactor is Mg(2+).

Its function is as follows. Necessary for normal cell division and for the maintenance of normal septation. The protein is Probable GTP-binding protein EngB of Bdellovibrio bacteriovorus (strain ATCC 15356 / DSM 50701 / NCIMB 9529 / HD100).